The primary structure comprises 311 residues: MPATDTNSTHTTPLHPDAQHTLPLHHSNTQPHVQTSDKHADEEHRTQMELDAADYAACAQARQHLYDQTQPLLLAYPNTNPQDSAHFPTENQHQLTHPLHNIGEGAALGYPVPRAEIRRGGGDWADSASDFDADCWCMWGRFGTMGRQPVVTLLLARQRDGLADWNVVRCRGTGFRAHDSEDGVSVWRQHLVFLLGGHGRRVQLERPSAGEAQARGLLPRIRITPISTSPRRKPPHPATSTASHHPHASPRSDHTLFPVPSTPSATVHNPRNYAVQLHAETTRTWRWAQRGERGAWMPAETFTCPKDKRPW.

Polar residues predominate over residues 1-12 (MPATDTNSTHTT). Disordered regions lie at residues 1–44 (MPAT…DEEH) and 205–268 (ERPS…ATVH). Positions 35–44 (TSDKHADEEH) are enriched in basic and acidic residues.

The protein belongs to the HHV-5 HKLF1 family.

This is an uncharacterized protein from Human cytomegalovirus (strain AD169) (HHV-5).